Consider the following 261-residue polypeptide: tRNA pseudouridine synthase A (261 aa).

The Nucleophile role is filled by D51. Y109 is a substrate binding site.

The protein belongs to the tRNA pseudouridine synthase TruA family. In terms of assembly, homodimer.

The enzyme catalyses uridine(38/39/40) in tRNA = pseudouridine(38/39/40) in tRNA. In terms of biological role, formation of pseudouridine at positions 38, 39 and 40 in the anticodon stem and loop of transfer RNAs. The protein is tRNA pseudouridine synthase A of Haemophilus ducreyi (strain 35000HP / ATCC 700724).